A 134-amino-acid polypeptide reads, in one-letter code: Pro-opiomelanocortin (134 aa).

S1 carries the N-acetylserine modification. V13 is subject to Valine amide. Residue S31 is modified to Phosphoserine. 2 stretches are compositionally biased toward basic and acidic residues: residues L43–R52 and S79–Y104. A disordered region spans residues L43–F107.

It belongs to the POMC family. Specific enzymatic cleavages at paired basic residues yield the different active peptides. In terms of tissue distribution, ACTH and MSH are produced by the pituitary gland.

Its subcellular location is the secreted. Stimulates the adrenal glands to release cortisol. Functionally, anorexigenic peptide. Increases the pigmentation of skin by increasing melanin production in melanocytes. Its function is as follows. Increases the pigmentation of skin by increasing melanin production in melanocytes. In terms of biological role, endogenous orexigenic opiate. Endogenous opiate. In Loxodonta africana (African elephant), this protein is Pro-opiomelanocortin (POMC).